We begin with the raw amino-acid sequence, 424 residues long: Tyrosine--tRNA ligase (424 aa).

An L-tyrosine-binding site is contributed by tyrosine 37. A 'HIGH' region motif is present at residues 42 to 51 (PTADSLHLGH). Tyrosine 175 and glutamine 179 together coordinate L-tyrosine. The short motif at 235–239 (KFGKT) is the 'KMSKS' region element. Position 238 (lysine 238) interacts with ATP. An S4 RNA-binding domain is found at 357–414 (ADLQQALVNAELVPSRGQARTMISSNAVAINGEKQSDPEYAFTDADRLFGRYTLLRRG).

Belongs to the class-I aminoacyl-tRNA synthetase family. TyrS type 1 subfamily. In terms of assembly, homodimer.

The protein localises to the cytoplasm. The catalysed reaction is tRNA(Tyr) + L-tyrosine + ATP = L-tyrosyl-tRNA(Tyr) + AMP + diphosphate + H(+). In terms of biological role, catalyzes the attachment of tyrosine to tRNA(Tyr) in a two-step reaction: tyrosine is first activated by ATP to form Tyr-AMP and then transferred to the acceptor end of tRNA(Tyr). In Yersinia enterocolitica serotype O:8 / biotype 1B (strain NCTC 13174 / 8081), this protein is Tyrosine--tRNA ligase.